The primary structure comprises 399 residues: Centrosomal protein 43 (399 aa).

The LisH domain occupies 70 to 102 (DGRLVASLVAEFLQFFNLDFTLAVFHPETSTIQ). Disordered stretches follow at residues 142–216 (PASV…SKSS) and 236–311 (DARD…KRGS). 2 positions are modified to phosphoserine: Ser-152 and Ser-160. Over residues 163 to 172 (GKSSANSTPS) the composition is skewed to polar residues. Thr-170 is subject to Phosphothreonine. Basic residues predominate over residues 175–186 (PRYKGQGKKKTI). Residues 197 to 216 (SETSQSEPSVSLSESKSKSS) are compositionally biased toward low complexity. At Ser-202 the chain carries Phosphoserine. The span at 246-256 (DGDDVEGDSFF) shows a compositional bias: acidic residues. The segment covering 259 to 275 (PIPKPEKTYGWRAEPRK) has biased composition (basic and acidic residues). Positions 290–302 (RSGLSSLAGAPSL) are enriched in low complexity. Residues Ser-301 and Ser-326 each carry the phosphoserine modification. The disordered stretch occupies residues 328–354 (GLGTGEDEDYADDFNSASHRSEKSELS). Tyr-337 carries the post-translational modification Phosphotyrosine.

It belongs to the CEP43 family. As to quaternary structure, homodimer. Part of a ternary complex that contains CEP350, CEP43 and MAPRE1. Interacts directly with CEP350 and MAPRE1. Interacts with CEP19. Interacts (via N-terminus) with CEP350 (via C-terminus).

It localises to the cytoplasm. It is found in the cytoskeleton. The protein resides in the microtubule organizing center. Its subcellular location is the centrosome. The protein localises to the centriole. It localises to the cilium basal body. Functionally, required for anchoring microtubules to the centrosomes. Required for ciliation. In Mus musculus (Mouse), this protein is Centrosomal protein 43.